The following is a 200-amino-acid chain: Histone chaperone asf1a-B (200 aa).

It belongs to the ASF1 family. As to quaternary structure, interacts with histone H3 (including both histone H3.1 and H3.3) and histone H4.

The protein resides in the nucleus. Functionally, histone chaperone that facilitates histone deposition and histone exchange and removal during nucleosome assembly and disassembly. The sequence is that of Histone chaperone asf1a-B (asf1ab) from Xenopus laevis (African clawed frog).